The chain runs to 707 residues: Choline transporter-like protein 4 (707 aa).

At 1–27 (MASEEYGEPAKHDPSFKGPIKKRGCTD) the chain is on the cytoplasmic side. A helical membrane pass occupies residues 28-48 (IICCVLFMVFLLGYMVVGILA). The Extracellular segment spans residues 49–225 (WLYGDPRQVI…KIFEDFAKSW (177 aa)). 5 N-linked (GlcNAc...) asparagine glycosylation sites follow: N62, N140, N176, N191, and N196. The chain crosses the membrane as a helical span at residues 226-246 (PWIITALVIAMVVSLLFLILL). Residues 247–249 (RFT) lie on the Cytoplasmic side of the membrane. Residues 250 to 270 (AGILVWVLIVGVIGVIGYGIY) traverse the membrane as a helical segment. Topologically, residues 271 to 305 (HCYMEYDTLNKQGVSVSDVGFTFNLGVYFRVKETW) are extracellular. A helical membrane pass occupies residues 306 to 326 (LAILIVLAVVEAILLLVLLFL). The Cytoplasmic segment spans residues 327 to 354 (RKRILIAIALIKEASKAIGHIMSSLFYP). The helical transmembrane segment at 355-375 (LVTFVLLVVCVAYWGMTALYL) threads the bilayer. At 376 to 442 (ATSGAPIYRI…TNLFNLQIYN (67 aa)) the chain is on the extracellular side. N-linked (GlcNAc...) asparagine glycans are attached at residues N389, N397, and N401. A helical membrane pass occupies residues 443-463 (VIGFLWCINFVIALGQCVLAG). At 464 to 494 (AFASYYWAFHKPKDIPFFPVAESFMRTLRYH) the chain is on the cytoplasmic side. The chain crosses the membrane as a helical span at residues 495 to 515 (TGSLAFGSLILTIVQLIRIIL). Topologically, residues 516-556 (EYVDHKLKGAQNPCTRFLLCCLKCCFWCLEKFIKFLNRNAY) are extracellular. A helical transmembrane segment spans residues 557–577 (IMIAVYGKNFCVSAKNAFKLL). The Cytoplasmic portion of the chain corresponds to 578 to 593 (MRNIVRVVVLDKVTDL). A helical transmembrane segment spans residues 594–614 (LIFFGKLIVVGGVGVLAFFFF). Residues 615-633 (SGRIPIPNDSFKSPTLNYY) lie on the Extracellular side of the membrane. N622 carries an N-linked (GlcNAc...) asparagine glycan. The chain crosses the membrane as a helical span at residues 634-654 (WIPIITVVLGSYMIAHGFFSV). Topologically, residues 655–707 (YNMCVDTLFLCFLEDLERNDGSQEKPYYMSKSLMSILNKKNRPPKSEEKKKKK) are cytoplasmic.

It belongs to the CTL (choline transporter-like) family.

It localises to the membrane. It is found in the apical cell membrane. It carries out the reaction choline(out) + n H(+)(in) = choline(in) + n H(+)(out). It catalyses the reaction thiamine diphosphate(out) = thiamine diphosphate(in). In terms of biological role, choline transporter that seems to play a role in the choline-acetylcholine system and is required to the efferent innervation of hair cells in the olivocochlear bundle for the maintenance of physiological function of outer hair cells and the protection of hair cells from acoustic injury. Also described as a thiamine pyrophosphate transporter. Its function is as follows. Also described as a thiamine pyrophosphate transporter. The protein is Choline transporter-like protein 4 (slc44a4) of Xenopus laevis (African clawed frog).